A 478-amino-acid chain; its full sequence is BUB3-interacting and GLEBS motif-containing protein ZNF207 (478 aa).

A microtubule-binding region region spans residues 1–92 (MGRKKKKQLK…EGIPEKDMDE (92 aa)). 2 consecutive C2H2-type zinc fingers follow at residues 11-34 (PWCW…KAKH) and 35-58 (FKCH…MQVH). The span at 99-111 (QKTQESQKKKQQD) shows a compositional bias: basic and acidic residues. Disordered regions lie at residues 99 to 157 (QKTQ…PGMP), 238 to 276 (APTA…SNSE), 300 to 362 (VGTD…ATSK), and 384 to 478 (RNLP…GGRY). A compositionally biased stretch (acidic residues) spans 112-121 (DSDEYDDDDS). Residues 127 to 136 (FQPQPVQPQQ) show a composition bias toward polar residues. Residues 142–157 (MAQPGLPPVPGAPGMP) are compositionally biased toward pro residues. 3 stretches are compositionally biased toward low complexity: residues 267–276 (SSSTASSNSE), 310–362 (TPAT…ATSK), and 433–446 (QGMP…MPPY). A GLEBS region spans residues 359–391 (ATSKLIHPDEDISLEERRAQLPKYQRNLPRPGQ). Positions 447–467 (GQGPPMVPPYQGGPPRPPMGM) are enriched in pro residues.

Interacts (via GLEBS region) with BUB3. Ubiquitous.

Its subcellular location is the nucleus. The protein localises to the chromosome. The protein resides in the centromere. It is found in the kinetochore. It localises to the cytoplasm. Its subcellular location is the cytoskeleton. The protein localises to the spindle. Kinetochore- and microtubule-binding protein that plays a key role in spindle assembly. ZNF207/BuGZ is mainly composed of disordered low-complexity regions and undergoes phase transition or coacervation to form temperature-dependent liquid droplets. Coacervation promotes microtubule bundling and concentrates tubulin, promoting microtubule polymerization and assembly of spindle and spindle matrix by concentrating its building blocks. Also acts as a regulator of mitotic chromosome alignment by mediating the stability and kinetochore loading of BUB3. Mechanisms by which BUB3 is protected are unclear: according to a first report, ZNF207/BuGZ may act by blocking ubiquitination and proteasomal degradation of BUB3. According to another report, the stabilization is independent of the proteasome. This chain is BUB3-interacting and GLEBS motif-containing protein ZNF207, found in Homo sapiens (Human).